We begin with the raw amino-acid sequence, 461 residues long: MKKKIISAILMSTVILSAAAPLSGVYADTNSDIAKQDATISSAQSAKAQAQAQVDSLQSKVDSLQQKQTSTKAQIAKIESEAKALNAQIATLNESIKERTKTLEAQARSAQVNSSATNYMDAVVNSKSLTDVIQKVTAIATVSSANKQMLEQQEKEQKELSQKSETVKKNYNQFVSLSQSLDSQAQELTSQQAELKVATLNYQATIATAQDKKQALLDEKAAAEKAAQEAAKKQAAYEAQQKEAAQAQAASTAATAKAVEAATSSASASSSQAPQVSTSTDNTTSNASASNSSNSSSNSSSSSSSSSSSSSSSSNSNAGGNTNSGTSTGNTGGTTTGGSGINSSPIGNPYAGGGCTDYVWQYFAAQGIYIRNIMPGNGGQWASNGPAQGVLHVVGAAPGVIASSFSADFVGYANSPYGHVAIVKSVNSDGTITIKEGGYGTTWWGHERTVSASGVTFLMPN.

The first 27 residues, 1 to 27, serve as a signal peptide directing secretion; it reads MKKKIISAILMSTVILSAAAPLSGVYA. Positions 264 to 329 are enriched in low complexity; it reads SSASASSSQA…GNTNSGTSTG (66 aa). The disordered stretch occupies residues 264-343; that stretch reads SSASASSSQA…TTTGGSGINS (80 aa). Residues 330 to 340 are compositionally biased toward gly residues; sequence NTGGTTTGGSG. The Peptidase C51 domain maps to 330–459; the sequence is NTGGTTTGGS…VSASGVTFLM (130 aa).

This chain is Secreted 45 kDa protein (usp45), found in Lactococcus lactis subsp. cremoris (strain MG1363).